The following is a 261-amino-acid chain: Indole-3-glycerol phosphate synthase (261 aa).

It belongs to the TrpC family.

It carries out the reaction 1-(2-carboxyphenylamino)-1-deoxy-D-ribulose 5-phosphate + H(+) = (1S,2R)-1-C-(indol-3-yl)glycerol 3-phosphate + CO2 + H2O. It participates in amino-acid biosynthesis; L-tryptophan biosynthesis; L-tryptophan from chorismate: step 4/5. In Burkholderia ambifaria (strain MC40-6), this protein is Indole-3-glycerol phosphate synthase.